We begin with the raw amino-acid sequence, 470 residues long: Argininosuccinate lyase (470 aa).

Belongs to the lyase 1 family. Argininosuccinate lyase subfamily.

It localises to the cytoplasm. The catalysed reaction is 2-(N(omega)-L-arginino)succinate = fumarate + L-arginine. The protein operates within amino-acid biosynthesis; L-arginine biosynthesis; L-arginine from L-ornithine and carbamoyl phosphate: step 3/3. The polypeptide is Argininosuccinate lyase (Bordetella avium (strain 197N)).